The primary structure comprises 463 residues: SCF E3 ubiquitin ligase complex F-box protein pof2 (463 aa).

Residues 1 to 42 form the F-box domain; that stretch reads MRVPNEVCFNILSYLEADELRCKSTVCTSWRNFIIPTLWEKV. LRR repeat units lie at residues 145-170, 171-196, 198-220, 225-247, 249-271, 278-299, 304-326, 328-353, 354-378, and 380-405; these read CPNLKALNIGNCGLVEDTGMVQIIKR, CPYLNRLIIPNCRKLTDVSLQILSEK, DLIELDISGCEGFHNADTLSRLV, GLKELSMDGCTELSHFITFLNLN, ELDAMRALSLNNLPDLKDSDIEL, KLNSLFLSKCIGLTDSSLLSLT, SLTTLHLGHCYEITDIGVQCLLK, CKNITYIDFGGCLRLSDIAVSAIAKL, PYLQRVGLVKCICLTDLSVILLSGS, and SRNLERVHLSYCIGLTAKSVSYLMYN.

In terms of assembly, part of a SCF E3 ubiquitin ligase complex. Interacts with skp1.

The protein localises to the mitochondrion. In terms of biological role, involved in substrate recognition in ubiquitin-dependent degradation. The polypeptide is SCF E3 ubiquitin ligase complex F-box protein pof2 (pof2) (Schizosaccharomyces pombe (strain 972 / ATCC 24843) (Fission yeast)).